Reading from the N-terminus, the 222-residue chain is Sororin-like protein (222 aa).

Residues 1 to 189 (MEAPRSVGGR…VKQEKEDPVS (189 aa)) form a disordered region. Residues 24–33 (SRSSQQSSSS) are compositionally biased toward low complexity. Basic and acidic residues predominate over residues 47 to 60 (RLVEQTTLKEKPKD). Residues 88–105 (ADLASPASAPSRPQTSRS) show a composition bias toward low complexity. Positions 155-162 (GKKTRQAS) match the Nuclear localization signal motif. Residues 167 to 179 (KTLKVAPKKRQRT) show a composition bias toward basic residues. The segment at 192–214 (CQDYIEKQKAYFAEIDAFELPVE) is C-terminal Sororin domain.

This sequence belongs to the sororin family.

It is found in the nucleus. In terms of biological role, regulator of sister chromatid cohesion in mitosis stabilizing cohesin complex association with chromatin. Antagonizes the action of WAPL proteins (WAPL1 and WAPL2) which stimulates cohesin dissociation from chromatin, particularly during somatic division in root cells and meiocytes during anaphase I. Required for centromeric sister chromatid cohesion during male meiosis (microsporogenesis). Cohesion ensures that chromosome partitioning is accurate in dividing cells and may play an important role in DNA repair. This chain is Sororin-like protein, found in Arabidopsis thaliana (Mouse-ear cress).